We begin with the raw amino-acid sequence, 230 residues long: Small ribosomal subunit protein uS3c (230 aa).

Positions 39-109 (IRSFIHSKLS…QLRVNVVEIA (71 aa)) constitute a KH type-2 domain.

This sequence belongs to the universal ribosomal protein uS3 family. In terms of assembly, part of the 30S ribosomal subunit.

The protein resides in the plastid. Its subcellular location is the chloroplast. In Pyropia yezoensis (Susabi-nori), this protein is Small ribosomal subunit protein uS3c (rps3).